A 299-amino-acid polypeptide reads, in one-letter code: tRNA dimethylallyltransferase (299 aa).

10–17 lines the ATP pocket; the sequence is GPTAVGKT. 12-17 contacts substrate; that stretch reads TAVGKT. An interaction with substrate tRNA region spans residues 35 to 38; that stretch reads DSQQ.

It belongs to the IPP transferase family. As to quaternary structure, monomer. It depends on Mg(2+) as a cofactor.

The catalysed reaction is adenosine(37) in tRNA + dimethylallyl diphosphate = N(6)-dimethylallyladenosine(37) in tRNA + diphosphate. Its function is as follows. Catalyzes the transfer of a dimethylallyl group onto the adenine at position 37 in tRNAs that read codons beginning with uridine, leading to the formation of N6-(dimethylallyl)adenosine (i(6)A). In Streptococcus thermophilus (strain ATCC BAA-491 / LMD-9), this protein is tRNA dimethylallyltransferase.